The chain runs to 183 residues: Ferritin light chain 1 (183 aa).

Positions 7–156 constitute a Ferritin-like diiron domain; that stretch reads QNYSTEVEAA…NHLTNLRRVA (150 aa). Fe cation-binding residues include glutamate 54, glutamate 57, glutamate 58, glutamate 61, and glutamate 64.

The protein belongs to the ferritin family. Oligomer of 24 subunits. There are two types of subunits: L (light) chain and H (heavy) chain. The major chain can be light or heavy, depending on the species and tissue type. The functional molecule forms a roughly spherical shell with a diameter of 12 nm and contains a central cavity into which the insoluble mineral iron core is deposited. Interacts with NCOA4. In terms of tissue distribution, in rat liver, the light chain is the major chain.

It localises to the cytoplasmic vesicle. The protein localises to the autophagosome. The protein resides in the cytoplasm. It is found in the autolysosome. In terms of biological role, stores iron in a soluble, non-toxic, readily available form. Important for iron homeostasis. Iron is taken up in the ferrous form and deposited as ferric hydroxides after oxidation. Also plays a role in delivery of iron to cells. Mediates iron uptake in capsule cells of the developing kidney. Delivery to lysosomes by the cargo receptor NCOA4 for autophagic degradation and release or iron. The chain is Ferritin light chain 1 (Ftl1) from Rattus norvegicus (Rat).